Consider the following 276-residue polypeptide: Streptothricin hydrolase (276 aa).

Residue C176 is the Nucleophile of the active site. The interval P250–R276 is disordered. Over residues A252–P267 the composition is skewed to low complexity.

It belongs to the isochorismatase family. Homodimer. Does not require a metal cofactor. serves as cofactor.

The catalysed reaction is streptothricin F + H2O = streptothricin F acid. In terms of biological role, catalyzes the hydrolysis of the amide bond of streptolidine lactam, thereby conferring streptothricin (ST) resistance. Can hydrolyze streptothricin-F and streptothricin-D. However, this strain is believed to be a ST nonproducer, which raises the possibility that its true role may not be its involvement in self-resistance to STs. May catalyze the hydrolysis of naturally occurring cyclic amide compounds that are structurally related to STs. The protein is Streptothricin hydrolase (sttH) of Streptomyces noursei (Streptomyces albulus).